Reading from the N-terminus, the 318-residue chain is Thymidylate synthase (318 aa).

DUMP contacts are provided by residues arginine 25 and 180–181; that span reads RR. The active-site Nucleophile is the cysteine 200. Residues 220 to 223, asparagine 231, and 261 to 263 contribute to the dUMP site; these read RSGD and HIY. Residue aspartate 223 coordinates (6R)-5,10-methylene-5,6,7,8-tetrahydrofolate. Position 317 (alanine 317) interacts with (6R)-5,10-methylene-5,6,7,8-tetrahydrofolate.

It belongs to the thymidylate synthase family. Bacterial-type ThyA subfamily. As to quaternary structure, homodimer.

It is found in the cytoplasm. It catalyses the reaction dUMP + (6R)-5,10-methylene-5,6,7,8-tetrahydrofolate = 7,8-dihydrofolate + dTMP. It functions in the pathway pyrimidine metabolism; dTTP biosynthesis. Catalyzes the reductive methylation of 2'-deoxyuridine-5'-monophosphate (dUMP) to 2'-deoxythymidine-5'-monophosphate (dTMP) while utilizing 5,10-methylenetetrahydrofolate (mTHF) as the methyl donor and reductant in the reaction, yielding dihydrofolate (DHF) as a by-product. This enzymatic reaction provides an intracellular de novo source of dTMP, an essential precursor for DNA biosynthesis. This is Thymidylate synthase from Bacillus cereus (strain ATCC 14579 / DSM 31 / CCUG 7414 / JCM 2152 / NBRC 15305 / NCIMB 9373 / NCTC 2599 / NRRL B-3711).